Reading from the N-terminus, the 85-residue chain is Small ribosomal subunit protein uS17 (85 aa).

It belongs to the universal ribosomal protein uS17 family. Part of the 30S ribosomal subunit.

Its function is as follows. One of the primary rRNA binding proteins, it binds specifically to the 5'-end of 16S ribosomal RNA. The protein is Small ribosomal subunit protein uS17 of Agathobacter rectalis (strain ATCC 33656 / DSM 3377 / JCM 17463 / KCTC 5835 / VPI 0990) (Eubacterium rectale).